Reading from the N-terminus, the 221-residue chain is MANSESSSSPVNEEENSQRISTLHHQTMPSDLTQDEFTQLSQSIAEFHTYQLGNGRCSSLLAQRIHAPPETVWSVVRRFDRPQIYKHFIKSCNVSEDFEMRVGCTRDVNVISGLPANTSRERLDLLDDDRRVTGFSITGGEHRLRNYKSVTTVHRFEKEEEEERIWTVVLESYVVDVPEGNSEEDTRLFADTVIRLNLQKLASITEAMNRNNNNNNSSQVR.

Residues 1 to 11 (MANSESSSSPV) show a composition bias toward low complexity. Residues 1-22 (MANSESSSSPVNEEENSQRIST) form a disordered region. Position 2 is an N-acetylalanine (alanine 2). The START-like stretch occupies residues 50–206 (YQLGNGRCSS…NLQKLASITE (157 aa)). Abscisate is bound by residues lysine 86, 116–121 (ANTSRE), 143–149 (RLRNYKS), and glutamate 171. Positions 112 to 116 (SGLPA) match the Gate loop motif. A Latch loop motif is present at residues 142–144 (HRL).

This sequence belongs to the PYR/PYL/RCAR abscisic acid intracellular receptor family. In terms of assembly, homodimer. Binds ABA on one subunit only. Interacts with HAB1, ABI1 and ABI2, and possibly with other PP2Cs. Binds to CARs protein in an ABA-independent manner, both at the plasma membrane and in the nucleus. Interacts directly with CAR1 and CAR4.

It localises to the cytoplasm. Its subcellular location is the nucleus. The protein localises to the cell membrane. Receptor for abscisic acid (ABA) required for ABA-mediated responses such as stomatal closure and germination inhibition. Inhibits the activity of group-A protein phosphatases type 2C (PP2Cs) when activated by ABA. Can be activated by both (-)-ABA and (+)-ABA. In Arabidopsis thaliana (Mouse-ear cress), this protein is Abscisic acid receptor PYL1 (PYL1).